The sequence spans 276 residues: Cytoskeleton protein RodZ (276 aa).

Residues 1-110 (MTSMRKKTIG…SSKKKKKKTS (110 aa)) are Cytoplasmic-facing. The chain crosses the membrane as a helical; Signal-anchor for type II membrane protein span at residues 111–131 (FLPLFYFILFALSILIFVTYY). The Extracellular portion of the chain corresponds to 132-276 (VWNYIQTQPE…GQITVTFTKN (145 aa)).

The protein belongs to the RodZ family. Interacts with MltG and MreC in the elongasome. Interacts with KhpB (also called EloR/Jag).

The protein resides in the cell membrane. In terms of biological role, cytoskeletal protein that is involved in cell-shape control through regulation of the length of the long axis. Probably part of the elongasome which synthesizes peripheral peptidoglycan. The polypeptide is Cytoskeleton protein RodZ (Streptococcus pneumoniae (strain ATCC BAA-255 / R6)).